Here is a 184-residue protein sequence, read N- to C-terminus: Photosystem I assembly protein Ycf4 (184 aa).

The next 2 helical transmembrane spans lie at Phe-22–Ser-42 and Ile-57–Ser-77.

This sequence belongs to the Ycf4 family.

It is found in the plastid. The protein resides in the chloroplast thylakoid membrane. Functionally, seems to be required for the assembly of the photosystem I complex. This chain is Photosystem I assembly protein Ycf4, found in Lobularia maritima (Sweet alyssum).